Here is a 434-residue protein sequence, read N- to C-terminus: Serine hydroxymethyltransferase (434 aa).

Residues leucine 128 and 132-134 each bind (6S)-5,6,7,8-tetrahydrofolate; that span reads GHL. Residue lysine 237 is modified to N6-(pyridoxal phosphate)lysine.

The protein belongs to the SHMT family. In terms of assembly, homodimer. Requires pyridoxal 5'-phosphate as cofactor.

The protein resides in the cytoplasm. The enzyme catalyses (6R)-5,10-methylene-5,6,7,8-tetrahydrofolate + glycine + H2O = (6S)-5,6,7,8-tetrahydrofolate + L-serine. The protein operates within one-carbon metabolism; tetrahydrofolate interconversion. It functions in the pathway amino-acid biosynthesis; glycine biosynthesis; glycine from L-serine: step 1/1. Its function is as follows. Catalyzes the reversible interconversion of serine and glycine with tetrahydrofolate (THF) serving as the one-carbon carrier. This reaction serves as the major source of one-carbon groups required for the biosynthesis of purines, thymidylate, methionine, and other important biomolecules. Also exhibits THF-independent aldolase activity toward beta-hydroxyamino acids, producing glycine and aldehydes, via a retro-aldol mechanism. The chain is Serine hydroxymethyltransferase from Corynebacterium glutamicum (strain R).